The following is a 315-amino-acid chain: MERNELVNFVEGILKRIGFRTMKLEFRGGCFDLVATRQLLLLFIKALANIDKFSEEQAEDLKKLAKLFKASPLLVGLRSKNAELEDGVVYERFGIYAITPGTLYSMFAEGEPPLIIAERGGFYVRIDGKKLKALREEHGYSITELAGILGISRKSLQRYEKGESVVSLEVALRLEEVFDEPLVKPIDVLRARLKDVTLTSEPDNILEKEVFEKLRKLGMSVVKIKTAPFNAITKEEEDDIELLTGIDERKTGRTLKRAELVSQMAEVVGSDGVFVVKKARMEVVRNVPILPKKLLEEIKDADELLELIRDLKFKS.

The HTH cro/C1-type domain maps to 131–189 (LKALREEHGYSITELAGILGISRKSLQRYEKGESVVSLEVALRLEEVFDEPLVKPIDVL). A DNA-binding region (H-T-H motif) is located at residues 142–161 (ITELAGILGISRKSLQRYEK).

The sequence is that of Putative HTH-type transcriptional regulatory protein PH1808 from Pyrococcus horikoshii (strain ATCC 700860 / DSM 12428 / JCM 9974 / NBRC 100139 / OT-3).